Reading from the N-terminus, the 424-residue chain is 3-isopropylmalate dehydratase large subunit 2 (424 aa).

3 residues coordinate [4Fe-4S] cluster: C299, C359, and C362.

This sequence belongs to the aconitase/IPM isomerase family. LeuC type 2 subfamily. Heterodimer of LeuC and LeuD. Requires [4Fe-4S] cluster as cofactor.

It carries out the reaction (2R,3S)-3-isopropylmalate = (2S)-2-isopropylmalate. Its pathway is amino-acid biosynthesis; L-leucine biosynthesis; L-leucine from 3-methyl-2-oxobutanoate: step 2/4. Its function is as follows. Catalyzes the isomerization between 2-isopropylmalate and 3-isopropylmalate, via the formation of 2-isopropylmaleate. In Rubrobacter xylanophilus (strain DSM 9941 / JCM 11954 / NBRC 16129 / PRD-1), this protein is 3-isopropylmalate dehydratase large subunit 2.